Here is a 199-residue protein sequence, read N- to C-terminus: NADH-quinone oxidoreductase subunit C (199 aa).

Belongs to the complex I 30 kDa subunit family. In terms of assembly, NDH-1 is composed of 14 different subunits. Subunits NuoB, C, D, E, F, and G constitute the peripheral sector of the complex.

It localises to the cell inner membrane. The enzyme catalyses a quinone + NADH + 5 H(+)(in) = a quinol + NAD(+) + 4 H(+)(out). Functionally, NDH-1 shuttles electrons from NADH, via FMN and iron-sulfur (Fe-S) centers, to quinones in the respiratory chain. The immediate electron acceptor for the enzyme in this species is believed to be ubiquinone. Couples the redox reaction to proton translocation (for every two electrons transferred, four hydrogen ions are translocated across the cytoplasmic membrane), and thus conserves the redox energy in a proton gradient. This is NADH-quinone oxidoreductase subunit C from Cupriavidus pinatubonensis (strain JMP 134 / LMG 1197) (Cupriavidus necator (strain JMP 134)).